A 300-amino-acid polypeptide reads, in one-letter code: uncharacterized protein (300 aa).

CBS domains follow at residues 10 to 68 (RFPP…FRDV), 88 to 148 (FLKY…HVKV), 152 to 207 (MTSE…EDVL), and 226 to 284 (ISSK…GVEI).

This is an uncharacterized protein from Thermofilum pendens.